Here is a 560-residue protein sequence, read N- to C-terminus: Choline/ethanolamine transporter FLVCR1 (560 aa).

Residues 1–43 form a disordered region; the sequence is MARPDDEVGPAVAPGHPLGKGYLPVPKGAPDGEARLVPQNGPE. Over 1 to 92 the chain is Cytoplasmic; that stretch reads MARPDDEVGP…EDVPCPACPP (92 aa). Residues 93 to 117 form a helical membrane-spanning segment; the sequence is RTALSPRRFVVLLIFSLYSLVNAFQ. Residues 118–135 lie on the Extracellular side of the membrane; it reads WIQYSSISNVFEDFYEVS. A helical transmembrane segment spans residues 136 to 163; sequence PLHINWLSMVYMVAYVPLIFPATWLLDT. At 164 to 165 the chain is on the cytoplasmic side; that stretch reads RG. A helical transmembrane segment spans residues 166-185; it reads LRLTALLGSGLNCLGAWVKC. Over 186-192 the chain is Extracellular; the sequence is GSVQRHL. Residues 193–221 traverse the membrane as a helical segment; the sequence is FWVTMLGQILCSVAQVFILGLPSPVASVW. Residue glutamine 207 coordinates ethanolamine. Over 222 to 226 the chain is Cytoplasmic; it reads FGPKE. Residues 227-252 traverse the membrane as a helical segment; sequence VSTACATAVLGNQLGTAVGFLLPPVL. Over 253-270 the chain is Extracellular; the sequence is VPALGTQNSTGLLAHTQN. Residue asparagine 270 is glycosylated (N-linked (GlcNAc...) asparagine). A helical membrane pass occupies residues 271–300; that stretch reads NTDLLAHNINTMFYGTAFISTFLFFLTIIA. Residues 301–336 lie on the Cytoplasmic side of the membrane; that stretch reads FKEKPPLPPSQAQAVLRDSPPEEYSYKSSIWNLCRN. A helical membrane pass occupies residues 337–367; sequence IPFVLLLVSYGIMTGAFYSISTLLNQIILTY. The Extracellular portion of the chain corresponds to 368 to 371; it reads YVGE. Residues 372–400 traverse the membrane as a helical segment; that stretch reads EVNAGRIGLTLVVAGMVGSILCGLWLDYT. At 401-402 the chain is on the cytoplasmic side; it reads KT. A helical membrane pass occupies residues 403–425; that stretch reads YKQTTLIVYVLSFIGMLIFTFTL. The Extracellular portion of the chain corresponds to 426–428; it reads NLG. A helical membrane pass occupies residues 429-458; sequence YIIVVFFTGGILGFFMTGYLPLGFEFAVEI. Residues 459-466 are Cytoplasmic-facing; sequence TYPESEGM. The chain crosses the membrane as a helical span at residues 467–492; sequence SSGLLNTAAQILGIFFTLAQGKITTD. Glutamine 476 lines the ethanolamine pocket. Glutamine 476 is a binding site for choline. Topologically, residues 493 to 495 are extracellular; it reads YNS. Residues 496-518 form a helical membrane-spanning segment; the sequence is PEAGNIFLCAWMFVGIILTALIK. Residues 519–560 are Cytoplasmic-facing; it reads SDLRRHNINTGLTNIDVKAVPVDSRVDPKPKVMVSIQSESSL. Serine 542 is modified (phosphoserine).

Belongs to the major facilitator superfamily. Feline leukemia virus subgroup C receptor (TC 2.A.1.28.1) family.

The protein localises to the cell membrane. It is found in the mitochondrion membrane. It carries out the reaction choline(out) = choline(in). It catalyses the reaction ethanolamine(in) = ethanolamine(out). The catalysed reaction is heme b(in) = heme b(out). Functionally, uniporter that mediates the transport of extracellular choline and ethanolamine into cells, thereby playing a key role in phospholipid biosynthesis. Choline and ethanolamine are the precursors of phosphatidylcholine and phosphatidylethanolamine, respectively, the two most abundant phospholipids. Transport is not coupled with proton transport and is exclusively driven by the choline (or ethanolamine) gradient across the plasma membrane. Also acts as a heme b transporter that mediates heme efflux from the cytoplasm to the extracellular compartment. In terms of biological role, uniporter that mediates the transport of extracellular choline and ethanolamine into cells. Choline and ethanolamine are the precursors of phosphatidylcholine and phosphatidylethanolamine, respectively, the two most abundant phospholipids. Transport is not coupled with proton transport and is exclusively driven by the choline (or ethanolamine) gradient across the plasma membrane. Also acts as a heme b transporter that mediates heme efflux from the cytoplasm to the extracellular compartment. Heme export depends on the presence of HPX and is required to maintain intracellular free heme balance, protecting cells from heme toxicity. Heme export provides protection from heme or ferrous iron toxicities in liver, brain, sensory neurons and during erythropoiesis, a process in which heme synthesis intensifies. Possibly export coproporphyrin and protoporphyrin IX, which are both intermediate products in the heme biosynthetic pathway. Does not export bilirubin. The molecular mechanism of heme transport, whether electrogenic, electroneutral or coupled to other ions, remains to be elucidated. Heme transporter that promotes heme efflux from the mitochondrion to the cytoplasm. Essential for erythroid differentiation. This chain is Choline/ethanolamine transporter FLVCR1 (Flvcr1), found in Mus musculus (Mouse).